The chain runs to 358 residues: Protein ttm-2 (358 aa).

Belongs to the arrestin family.

In terms of biological role, involved in resistance to B.thuringiensis pore-forming toxin Cry5B downstream of the sek-1 and pmk-1 MAPK kinase pathway. The chain is Protein ttm-2 from Caenorhabditis elegans.